Consider the following 154-residue polypeptide: Ribosomal RNA-processing protein 14-N (154 aa).

A disordered region spans residues 36-154 (WKQKKSTLEE…KHKASPRAGF (119 aa)). Ser-80 is subject to Phosphoserine. A Phosphothreonine modification is found at Thr-83. The span at 105–133 (QDLREKRKAGDLNQKRQNKRPVENEKDSQ) shows a compositional bias: basic and acidic residues. A compositionally biased stretch (basic residues) spans 140–154 (KVQKKKHKASPRAGF).

The protein belongs to the SURF6 family.

It is found in the nucleus. The protein resides in the nucleolus. Its function is as follows. Involved in ribosome biogenesis and cell polarity. Required for the synthesis of both 40S and 60S ribosomal subunits and may also play some direct role in correct positioning of the mitotic spindle during mitosis. In Schizosaccharomyces pombe (strain 972 / ATCC 24843) (Fission yeast), this protein is Ribosomal RNA-processing protein 14-N (rrp14n).